The primary structure comprises 314 residues: Fibrinogen-like protein 1 (314 aa).

A signal peptide spans 1 to 22 (MGEIRSFVLITVALILGKESWV). Residues 28–62 (CLQEQVRLRAQVRQLETRVKQQQVVIAQLLHEKEV) are a coiled coil. The region spanning 76–308 (LGGKRHYADC…SVVMKIRPSD (233 aa)) is the Fibrinogen C-terminal domain. 2 disulfide bridges follow: cysteine 85–cysteine 114 and cysteine 250–cysteine 263.

In terms of assembly, homodimer. Interacts (via the Fibrinogen C-terminal domain) with LAG3 (via Ig-like domains 1 and 2).

Its subcellular location is the secreted. Functionally, immune suppressive molecule that inhibits antigen-specific T-cell activation by acting as a major ligand of LAG3. Responsible for LAG3 T-cell inhibitory function. Binds LAG3 independently from MHC class II (MHC-II). Secreted by, and promotes growth of, hepatocytes. This is Fibrinogen-like protein 1 from Rattus norvegicus (Rat).